Here is a 397-residue protein sequence, read N- to C-terminus: Succinate--CoA ligase [ADP-forming] subunit beta (397 aa).

The region spanning 9-254 is the ATP-grasp domain; sequence KALLRQYGAP…ETEEDPKELA (246 aa). ATP contacts are provided by residues Lys-46, 53–55, Glu-109, Ser-112, and Glu-117; that span reads GRG. Asn-209 and Asp-223 together coordinate Mg(2+). Residues Asn-274 and 331–333 each bind substrate; that span reads GIM.

The protein belongs to the succinate/malate CoA ligase beta subunit family. Heterotetramer of two alpha and two beta subunits. Mg(2+) serves as cofactor.

It carries out the reaction succinate + ATP + CoA = succinyl-CoA + ADP + phosphate. The enzyme catalyses GTP + succinate + CoA = succinyl-CoA + GDP + phosphate. The protein operates within carbohydrate metabolism; tricarboxylic acid cycle; succinate from succinyl-CoA (ligase route): step 1/1. Its function is as follows. Succinyl-CoA synthetase functions in the citric acid cycle (TCA), coupling the hydrolysis of succinyl-CoA to the synthesis of either ATP or GTP and thus represents the only step of substrate-level phosphorylation in the TCA. The beta subunit provides nucleotide specificity of the enzyme and binds the substrate succinate, while the binding sites for coenzyme A and phosphate are found in the alpha subunit. This is Succinate--CoA ligase [ADP-forming] subunit beta from Paracoccus denitrificans (strain Pd 1222).